Here is a 906-residue protein sequence, read N- to C-terminus: Cadherin-2 (906 aa).

The first 25 residues, 1 to 25 (MCRIAGAPRTLLPLLAALLQASVEA), serve as a signal peptide directing secretion. Positions 26 to 159 (SGEIALCKTG…HSGHLQRQKR (134 aa)) are excised as a propeptide. 2 positions are modified to phosphoserine: S96 and S135. 5 consecutive Cadherin domains span residues 160–267 (DWVI…RPEF), 268–382 (LHQV…PPEF), 383–497 (TAMT…NPYF), 498–603 (APNP…DNAP), and 604–714 (QVLP…DVDR). Over 160 to 724 (DWVIPPINLP…IVGAGLGTGA (565 aa)) the chain is Extracellular. E170 lines the Ca(2+) pocket. N190 carries N-linked (GlcNAc...) asparagine glycosylation. Residues D226, E228, D259, M260, N261, D262, and N263 each coordinate Ca(2+). N273 carries an N-linked (GlcNAc...) asparagine glycan. Ca(2+) contacts are provided by D293, D295, and N301. Residue N325 is glycosylated (N-linked (GlcNAc...) asparagine). Ca(2+) is bound at residue D353. Residues N402, N572, N622, N651, and N692 are each glycosylated (N-linked (GlcNAc...) asparagine). A helical transmembrane segment spans residues 725-745 (IIAILLCIIILLILVLMFVVW). The Cytoplasmic portion of the chain corresponds to 746–906 (MKRRDKERQA…LADMYGGGDD (161 aa)). Positions 863-880 (SGSTAGSLSSLNSSSSGG) are enriched in low complexity. Positions 863–884 (SGSTAGSLSSLNSSSSGGEQDY) are disordered.

In terms of assembly, homodimer (via extracellular region). Can also form heterodimers with other cadherins (via extracellular region). Dimerization occurs in trans, i.e. with a cadherin chain from another cell. Interacts with CDCP1. Interacts with PCDH8; this complex may also include TAOK2. The interaction with PCDH8 may lead to internalization through TAOK2/p38 MAPK pathway. Identified in a complex containing FGFR4, NCAM1, CDH2, PLCG1, FRS2, SRC, SHC1, GAP43 and CTTN. May interact with OBSCN (via protein kinase domain 2). Interacts with FBXO45. Cleaved by MMP24. Ectodomain cleavage leads to the generation of a soluble 90 kDa N-terminal soluble fragment and a 45 kDa membrane-bound C-terminal fragment 1 (CTF1), which is further cleaved by gamma-secretase into a 35 kDa. Cleavage in neural stem cells by MMP24 affects CDH2-mediated anchorage of neural stem cells to ependymocytes in the adult subependymal zone, leading to modulate neural stem cell quiescence.

Its subcellular location is the cell membrane. It localises to the sarcolemma. The protein resides in the cell junction. The protein localises to the cell surface. It is found in the desmosome. Its subcellular location is the adherens junction. Calcium-dependent cell adhesion protein; preferentially mediates homotypic cell-cell adhesion by dimerization with a CDH2 chain from another cell. Cadherins may thus contribute to the sorting of heterogeneous cell types. Acts as a regulator of neural stem cells quiescence by mediating anchorage of neural stem cells to ependymocytes in the adult subependymal zone: upon cleavage by MMP24, CDH2-mediated anchorage is affected, leading to modulate neural stem cell quiescence. Plays a role in cell-to-cell junction formation between pancreatic beta cells and neural crest stem (NCS) cells, promoting the formation of processes by NCS cells. Required for proper neurite branching. Required for pre- and postsynaptic organization. CDH2 may be involved in neuronal recognition mechanism. In hippocampal neurons, may regulate dendritic spine density. In Callithrix jacchus (White-tufted-ear marmoset), this protein is Cadherin-2 (CDH2).